The chain runs to 414 residues: Imidazolonepropionase (414 aa).

Positions 77 and 79 each coordinate Fe(3+). Histidine 77 and histidine 79 together coordinate Zn(2+). 4-imidazolone-5-propanoate-binding residues include arginine 86, tyrosine 149, and histidine 184. Tyrosine 149 contributes to the N-formimidoyl-L-glutamate binding site. Histidine 249 serves as a coordination point for Fe(3+). Zn(2+) is bound at residue histidine 249. Position 252 (glutamate 252) interacts with 4-imidazolone-5-propanoate. A Fe(3+)-binding site is contributed by aspartate 323. Zn(2+) is bound at residue aspartate 323. N-formimidoyl-L-glutamate contacts are provided by asparagine 325 and glycine 327. Serine 328 serves as a coordination point for 4-imidazolone-5-propanoate.

It belongs to the metallo-dependent hydrolases superfamily. HutI family. Requires Zn(2+) as cofactor. Fe(3+) serves as cofactor.

Its subcellular location is the cytoplasm. It catalyses the reaction 4-imidazolone-5-propanoate + H2O = N-formimidoyl-L-glutamate. It participates in amino-acid degradation; L-histidine degradation into L-glutamate; N-formimidoyl-L-glutamate from L-histidine: step 3/3. Its function is as follows. Catalyzes the hydrolytic cleavage of the carbon-nitrogen bond in imidazolone-5-propanoate to yield N-formimidoyl-L-glutamate. It is the third step in the universal histidine degradation pathway. This chain is Imidazolonepropionase, found in Phocaeicola vulgatus (strain ATCC 8482 / DSM 1447 / JCM 5826 / CCUG 4940 / NBRC 14291 / NCTC 11154) (Bacteroides vulgatus).